We begin with the raw amino-acid sequence, 750 residues long: Polyribonucleotide nucleotidyltransferase (750 aa).

Positions 492 and 498 each coordinate Mg(2+). Residues 559–618 (PQLSVVEVNPEIIRVIIGPGGKNIKAITSATGASIDIEDSGRISIFAPTKESMDMAREMV) enclose the KH domain. An S1 motif domain is found at 628–695 (GKNYTAKVRK…NDGRVRASRK (68 aa)). Residues 705–750 (EWDPADTARPPRKPRDRDDRGDRGGRGDRGDRGGRNGRGGDRRDRR) are disordered. Over residues 717–750 (KPRDRDDRGDRGGRGDRGDRGGRNGRGGDRRDRR) the composition is skewed to basic and acidic residues.

The protein belongs to the polyribonucleotide nucleotidyltransferase family. Mg(2+) serves as cofactor.

It is found in the cytoplasm. The catalysed reaction is RNA(n+1) + phosphate = RNA(n) + a ribonucleoside 5'-diphosphate. Involved in mRNA degradation. Catalyzes the phosphorolysis of single-stranded polyribonucleotides processively in the 3'- to 5'-direction. The chain is Polyribonucleotide nucleotidyltransferase from Oleidesulfovibrio alaskensis (strain ATCC BAA-1058 / DSM 17464 / G20) (Desulfovibrio alaskensis).